Reading from the N-terminus, the 349-residue chain is UDP-3-O-acylglucosamine N-acyltransferase (349 aa).

Catalysis depends on histidine 246, which acts as the Proton acceptor.

The protein belongs to the transferase hexapeptide repeat family. LpxD subfamily. Homotrimer.

The catalysed reaction is a UDP-3-O-[(3R)-3-hydroxyacyl]-alpha-D-glucosamine + a (3R)-hydroxyacyl-[ACP] = a UDP-2-N,3-O-bis[(3R)-3-hydroxyacyl]-alpha-D-glucosamine + holo-[ACP] + H(+). It functions in the pathway bacterial outer membrane biogenesis; LPS lipid A biosynthesis. In terms of biological role, catalyzes the N-acylation of UDP-3-O-acylglucosamine using 3-hydroxyacyl-ACP as the acyl donor. Is involved in the biosynthesis of lipid A, a phosphorylated glycolipid that anchors the lipopolysaccharide to the outer membrane of the cell. The protein is UDP-3-O-acylglucosamine N-acyltransferase of Protochlamydia amoebophila (strain UWE25).